A 365-amino-acid polypeptide reads, in one-letter code: Dihydroorotate dehydrogenase (quinone) (365 aa).

FMN-binding positions include 61-65 (AGFDK) and Ser-85. Lys-65 is a binding site for substrate. 110-114 (NRMGF) serves as a coordination point for substrate. Positions 139 and 170 each coordinate FMN. Asn-170 serves as a coordination point for substrate. The Nucleophile role is filled by Ser-173. Asn-175 contacts substrate. Residues Lys-214 and Ser-242 each contribute to the FMN site. Position 243-244 (243-244 (NT)) interacts with substrate. Residues Gly-266, Gly-295, and 316-317 (YS) each bind FMN.

The protein belongs to the dihydroorotate dehydrogenase family. Type 2 subfamily. As to quaternary structure, monomer. FMN serves as cofactor.

Its subcellular location is the cell membrane. It carries out the reaction (S)-dihydroorotate + a quinone = orotate + a quinol. Its pathway is pyrimidine metabolism; UMP biosynthesis via de novo pathway; orotate from (S)-dihydroorotate (quinone route): step 1/1. Its function is as follows. Catalyzes the conversion of dihydroorotate to orotate with quinone as electron acceptor. This is Dihydroorotate dehydrogenase (quinone) from Bradyrhizobium diazoefficiens (strain JCM 10833 / BCRC 13528 / IAM 13628 / NBRC 14792 / USDA 110).